Consider the following 395-residue polypeptide: ATP phosphoribosyltransferase regulatory subunit (395 aa).

Belongs to the class-II aminoacyl-tRNA synthetase family. HisZ subfamily. As to quaternary structure, heteromultimer composed of HisG and HisZ subunits.

It localises to the cytoplasm. The protein operates within amino-acid biosynthesis; L-histidine biosynthesis; L-histidine from 5-phospho-alpha-D-ribose 1-diphosphate: step 1/9. Its function is as follows. Required for the first step of histidine biosynthesis. May allow the feedback regulation of ATP phosphoribosyltransferase activity by histidine. The sequence is that of ATP phosphoribosyltransferase regulatory subunit from Stutzerimonas stutzeri (Pseudomonas stutzeri).